The primary structure comprises 391 residues: MSGRFGRFGGQYVPETVMNALIELEREFEKAKEDKDFMEEYRYYLREYSGRPTPLYYAENLTKRLGGAKIYLKREDLNHTGAHKINNVLGQILLAKRMNKKRVIAETGAGQHGVATATAAAMFGMECEIFMGEEDIKRQSLNVFRMKLLGAKVTPVTTGTKTLKDAVNEAIRDWVTNIDNTFYVIGSVVGPHPYPTMVRDFQRVIGDEAKEQILQKEGRLPDYVIACVGGGSNAMGIFYPFIEDKEVKLIGVEAAGEGIETGKHAAAMAKGSVGVLHGMMTYLLQDEEGRIMPVYSISAGLDYPGVGPEHAFLKESNRAQYVYATDEEALAAFMDLSQTEGIIPALESAHALAYAMKLAPNLTKDNIIIVNLSGRGDKDVNTVAKVLGVEL.

Lysine 84 carries the N6-(pyridoxal phosphate)lysine modification.

The protein belongs to the TrpB family. Tetramer of two alpha and two beta chains. The cofactor is pyridoxal 5'-phosphate.

The enzyme catalyses (1S,2R)-1-C-(indol-3-yl)glycerol 3-phosphate + L-serine = D-glyceraldehyde 3-phosphate + L-tryptophan + H2O. Its pathway is amino-acid biosynthesis; L-tryptophan biosynthesis; L-tryptophan from chorismate: step 5/5. In terms of biological role, the beta subunit is responsible for the synthesis of L-tryptophan from indole and L-serine. This chain is Tryptophan synthase beta chain, found in Thermoanaerobacter pseudethanolicus (strain ATCC 33223 / 39E) (Clostridium thermohydrosulfuricum).